Reading from the N-terminus, the 101-residue chain is MMLEHIPVLSAYLFSIDIYGLITSRNMVRALMCLELILNAVNINFVTFSDFFDSRQLKGNIFSIFVIAIAAAEAAIGSAIVSSIYRNRKSTRINQSTLLNK.

3 helical membrane-spanning segments follow: residues 2 to 22 (MLEH…YGLI), 32 to 52 (MCLE…SDFF), and 61 to 81 (IFSI…SAIV).

This sequence belongs to the complex I subunit 4L family. NDH is composed of at least 16 different subunits, 5 of which are encoded in the nucleus.

It localises to the plastid. The protein localises to the chloroplast thylakoid membrane. The enzyme catalyses a plastoquinone + NADH + (n+1) H(+)(in) = a plastoquinol + NAD(+) + n H(+)(out). It carries out the reaction a plastoquinone + NADPH + (n+1) H(+)(in) = a plastoquinol + NADP(+) + n H(+)(out). Functionally, NDH shuttles electrons from NAD(P)H:plastoquinone, via FMN and iron-sulfur (Fe-S) centers, to quinones in the photosynthetic chain and possibly in a chloroplast respiratory chain. The immediate electron acceptor for the enzyme in this species is believed to be plastoquinone. Couples the redox reaction to proton translocation, and thus conserves the redox energy in a proton gradient. In Gossypium barbadense (Sea Island cotton), this protein is NAD(P)H-quinone oxidoreductase subunit 4L, chloroplastic.